The following is a 442-amino-acid chain: MSEIGSYHDTIFALSSGRLPSGVAVIRISGPKTRFVYETICQAIPEPRHAALLTFRSRNGDAIDRGLTLFFPAPHSFTGEDCAEFHLHGGKAVVEKMLAVLGELPGCRIAEAGEFTRRAFANGKMDLTIAEGLADLIAAETEGQRRLAMQVASGNQRKLYSEWRQRLINARAFIEAELDFADESDVPGSVSMQVWQQLSALKHEIEHHIASGKRAAMLRDGLHVVIVGAPNAGKSSLLNFLAGRDVAIISKEAGTTRDLLEVKLDLGGIPVYVTDTAGLRETDSVVEKIGIERARARMAEADLVLSLEDMSGPVSVTVEKIEAETWLIGTKADLGGSASGLWKYHISTMTGSGLEQLLDALQAFAEAKIGQIEDAVPTRQRHINLLRATIEEIEKAIEGDDLPLELRAENMRLASQFLGRITGDVDVEEILDVIFSQFCIGK.

Arg-27, Glu-84, and Lys-124 together coordinate (6S)-5-formyl-5,6,7,8-tetrahydrofolate. The region spanning 221 to 366 (GLHVVIVGAP…LLDALQAFAE (146 aa)) is the TrmE-type G domain. GTP contacts are provided by residues 231–236 (NAGKSS), 250–256 (SKEAGTT), and 275–278 (DTAG). 2 residues coordinate Mg(2+): Ser-235 and Thr-256. Lys-442 contributes to the (6S)-5-formyl-5,6,7,8-tetrahydrofolate binding site.

Belongs to the TRAFAC class TrmE-Era-EngA-EngB-Septin-like GTPase superfamily. TrmE GTPase family. As to quaternary structure, homodimer. Heterotetramer of two MnmE and two MnmG subunits. Requires K(+) as cofactor.

Its subcellular location is the cytoplasm. Functionally, exhibits a very high intrinsic GTPase hydrolysis rate. Involved in the addition of a carboxymethylaminomethyl (cmnm) group at the wobble position (U34) of certain tRNAs, forming tRNA-cmnm(5)s(2)U34. This chain is tRNA modification GTPase MnmE, found in Brucella suis biovar 1 (strain 1330).